A 276-amino-acid chain; its full sequence is Rhamnulose-1-phosphate aldolase (276 aa).

The active site involves E117. Residues H141, H143, and H212 each contribute to the Zn(2+) site.

It belongs to the aldolase class II family. RhaD subfamily. In terms of assembly, homotetramer. The cofactor is Zn(2+).

The protein localises to the cytoplasm. It carries out the reaction L-rhamnulose 1-phosphate = (S)-lactaldehyde + dihydroxyacetone phosphate. The protein operates within carbohydrate degradation; L-rhamnose degradation; glycerone phosphate from L-rhamnose: step 3/3. In terms of biological role, catalyzes the reversible cleavage of L-rhamnulose-1-phosphate to dihydroxyacetone phosphate (DHAP) and L-lactaldehyde. In Klebsiella pneumoniae subsp. pneumoniae (strain ATCC 700721 / MGH 78578), this protein is Rhamnulose-1-phosphate aldolase.